The primary structure comprises 283 residues: UPF0276 protein Anae109_1558 (283 aa).

Belongs to the UPF0276 family.

In Anaeromyxobacter sp. (strain Fw109-5), this protein is UPF0276 protein Anae109_1558.